A 411-amino-acid chain; its full sequence is Lissencephaly-1 homolog (411 aa).

The 33-residue stretch at glutamine 9–threonine 41 folds into the LisH domain. Residues threonine 56–alanine 83 adopt a coiled-coil conformation. WD repeat units lie at residues glycine 106–lysine 147, glycine 148–lysine 187, glycine 191–threonine 230, glycine 233–glutamate 272, aspartate 275–threonine 334, glycine 337–threonine 376, and alanine 379–arginine 411.

This sequence belongs to the WD repeat LIS1/nudF family.

The protein localises to the cytoplasm. The protein resides in the cytoskeleton. Its subcellular location is the microtubule organizing center. It is found in the centrosome. Positively regulates the activity of the minus-end directed microtubule motor protein dynein. May enhance dynein-mediated microtubule sliding by targeting dynein to the microtubule plus end. Required for several dynein- and microtubule-dependent processes. The chain is Lissencephaly-1 homolog from Drosophila yakuba (Fruit fly).